Consider the following 253-residue polypeptide: Small ribosomal subunit protein eS6 (253 aa).

Residues 200 to 253 are disordered; the sequence is KKRLAKRKQSENDYAKLLAQRKKESKVRRQEELKRRRSASMRDSKSSDKSAPQK. The segment covering 226–247 has biased composition (basic and acidic residues); that stretch reads VRRQEELKRRRSASMRDSKSSD.

It belongs to the eukaryotic ribosomal protein eS6 family. In terms of assembly, component of the small ribosomal subunit. Part of the small subunit (SSU) processome, composed of more than 70 proteins and the RNA chaperone small nucleolar RNA (snoRNA) U3. Ribosomal protein S6 is the major substrate of protein kinases in eukaryote ribosomes.

The protein localises to the cytoplasm. It is found in the nucleus. Its subcellular location is the nucleolus. In terms of biological role, component of the 40S small ribosomal subunit. Plays an important role in controlling cell growth and proliferation through the selective translation of particular classes of mRNA. Part of the small subunit (SSU) processome, first precursor of the small eukaryotic ribosomal subunit. During the assembly of the SSU processome in the nucleolus, many ribosome biogenesis factors, an RNA chaperone and ribosomal proteins associate with the nascent pre-rRNA and work in concert to generate RNA folding, modifications, rearrangements and cleavage as well as targeted degradation of pre-ribosomal RNA by the RNA exosome. This Spodoptera frugiperda (Fall armyworm) protein is Small ribosomal subunit protein eS6 (RpS6).